A 2458-amino-acid polypeptide reads, in one-letter code: Acetyl-CoA carboxylase 2 (2458 aa).

Ser-35 carries the phosphoserine modification. Positions 35-155 are disordered; it reads SKSEANLIPS…SPSKEDKKQA (121 aa). Positions 51 to 60 are enriched in polar residues; that stretch reads SDNSGETPQR. Thr-70 is subject to Phosphothreonine. Basic and acidic residues predominate over residues 77 to 87; that stretch reads ASHKGPKDAGR. Residues Ser-91 and Ser-95 each carry the phosphoserine modification. Residues 103 to 146 are compositionally biased toward polar residues; the sequence is PLSSSDAAPSPELQANGTGTQGLEATDTNGLSSSARPQGQQAGS. Residues Ser-169, Ser-175, Ser-192, Ser-195, and Ser-200 each carry the phosphoserine modification. A disordered region spans residues 174–193; that stretch reads SSDEDSVAGSSRESTRKGSR. Thr-207 bears the Phosphothreonine mark. Residue Ser-220 is modified to Phosphoserine. Ser-222 is subject to Phosphoserine; by AMPK. The region spanning 259-761 is the Biotin carboxylation domain; it reads VIEKVLIANN…DTGWLDYLIA (503 aa). Residues 414–609 form the ATP-grasp domain; the sequence is DDLQQGKRIS…LPAAQLQIAM (196 aa). 458 to 463 contributes to the ATP binding site; the sequence is GGGGKG. A Phosphoserine modification is found at Ser-469. Mg(2+)-binding residues include Glu-567, Glu-580, and Asn-582. Positions 567, 580, and 582 each coordinate Mn(2+). The active site involves Arg-584. Thr-753 bears the Phosphothreonine mark. One can recognise a Biotinyl-binding domain in the interval 888–962; that stretch reads FEKENDPTVL…EAGCVVARLE (75 aa). Lys-929 carries the post-translational modification N6-biotinyllysine. Position 1340 is a phosphoserine (Ser-1340). Thr-1342 bears the Phosphothreonine mark. A phosphoserine mark is found at Ser-1360 and Ser-1405. Residues 1695 to 2025 enclose the CoA carboxyltransferase N-terminal domain; it reads PYVTKDLLQA…DNHSPVPIIT (331 aa). The tract at residues 1695–2345 is carboxyltransferase; sequence PYVTKDLLQA…EDQVKQEILQ (651 aa). 3 residues coordinate CoA: Arg-1934, Lys-2238, and Arg-2240. The region spanning 2029-2345 is the CoA carboxyltransferase C-terminal domain; that stretch reads PIDREIEFLP…EDQVKQEILQ (317 aa).

Monomer, homodimer, and homotetramer. Forms filamentous polymers. Interacts with MID1IP1; interaction with MID1IP1 promotes oligomerization and increases its activity in a citrate-dependent manner. Biotin is required as a cofactor. It depends on Mg(2+) as a cofactor. Requires Mn(2+) as cofactor. The biotin cofactor is covalently attached to the central biotinyl-binding domain and is required for the catalytic activity. In terms of processing, phosphorylation at Ser-222 by AMPK inactivates the enzyme. Required for the maintenance of skeletal muscle lipid and glucose homeostasis. Widely expressed with highest levels in heart, skeletal muscle, liver, adipose tissue, mammary gland, adrenal gland and colon. Isoform 3 is expressed in skeletal muscle, adipose tissue and liver (at protein level). Isoform 3 is detected at high levels in adipose tissue with lower levels in heart, liver, skeletal muscle and testis.

Its subcellular location is the mitochondrion. It catalyses the reaction hydrogencarbonate + acetyl-CoA + ATP = malonyl-CoA + ADP + phosphate + H(+). Its pathway is lipid metabolism; malonyl-CoA biosynthesis; malonyl-CoA from acetyl-CoA: step 1/1. Activity is increased by oligomerization of the protein into filaments. The oligomerization and the activity of the enzyme are inhibited by phosphorylation at Ser-222. Inhibited by its product, malonyl-CoA. Activated by citrate. Activation by MID1IP1 is citrate-dependent. Soraphen A, inhibits the enzyme by preventing the formation of active filamentous oligomers. Functionally, mitochondrial enzyme that catalyzes the carboxylation of acetyl-CoA to malonyl-CoA and plays a central role in fatty acid metabolism. Catalyzes a 2 steps reaction starting with the ATP-dependent carboxylation of the biotin carried by the biotin carboxyl carrier (BCC) domain followed by the transfer of the carboxyl group from carboxylated biotin to acetyl-CoA. Through the production of malonyl-CoA that allosterically inhibits carnitine palmitoyltransferase 1 at the mitochondria, negatively regulates fatty acid oxidation. Together with its cytosolic isozyme ACACA, which is involved in de novo fatty acid biosynthesis, promotes lipid storage. The polypeptide is Acetyl-CoA carboxylase 2 (Homo sapiens (Human)).